The following is a 125-amino-acid chain: Major intrinsically disordered NOTCH2-binding receptor 1-like (125 aa).

Asn37 is a glycosylation site (N-linked (GlcNAc...) asparagine). Residues 100-120 (FAFITLFVCAVVIIITVPIVV) form a helical membrane-spanning segment.

Belongs to the MINAR family. As to quaternary structure, interacts with NOTCH2. As to expression, highly expressed in the auditory hair cells.

It localises to the lysosome membrane. It is found in the endoplasmic reticulum membrane. Its function is as follows. Binds cholesterol and may regulate the distribution and homeostasis of cholesterol in hair cells. May play a role in angiogenesis. This chain is Major intrinsically disordered NOTCH2-binding receptor 1-like, found in Danio rerio (Zebrafish).